The following is a 190-amino-acid chain: DNA dC-&gt;dU-editing enzyme APOBEC-3C (190 aa).

One can recognise a CMP/dCMP-type deaminase domain in the interval D29–L138. Residues E40 to Y86 form a (Microbial infection) Required for interaction with human foamy virus protein Bet region. H66 provides a ligand contact to Zn(2+). E68 acts as the Proton donor in catalysis. Positions 97 and 100 each coordinate Zn(2+).

It belongs to the cytidine and deoxycytidylate deaminase family. As to quaternary structure, homodimer. Interacts with TRIB3. Interacts with AGO2. In terms of assembly, (Microbial infection) Interacts with human foamy virus protein Bet; this interaction does not induce APOBEC3C degradation but prevents its dimerization and incorporation into the virion by binding of Bet close to or within the APOBEC3C dimerization site. (Microbial infection) Interacts with HIV-1 Vif. Zn(2+) serves as cofactor. In terms of tissue distribution, expressed in spleen, testes, peripherical blood lymphocytes, heart, thymus, prostate and ovary.

The protein resides in the nucleus. It is found in the cytoplasm. It carries out the reaction a 2'-deoxycytidine in single-stranded DNA + H2O + H(+) = a 2'-deoxyuridine in single-stranded DNA + NH4(+). With respect to regulation, (Microbial infection) Antiviral activity is neutralized by the HIV-1 virion infectivity factor (Vif), that prevents its incorporation into progeny HIV-1 virions by both inhibiting its translation and/or by inducing its ubiquitination and subsequent degradation by the 26S proteasome. Functionally, DNA deaminase (cytidine deaminase) which acts as an inhibitor of retrovirus replication and retrotransposon mobility via deaminase-dependent and -independent mechanisms. After the penetration of retroviral nucleocapsids into target cells of infection and the initiation of reverse transcription, it can induce the conversion of cytosine to uracil in the minus-sense single-strand viral DNA, leading to G-to-A hypermutations in the subsequent plus-strand viral DNA. The resultant detrimental levels of mutations in the proviral genome, along with a deamination-independent mechanism that works prior to the proviral integration, together exert efficient antiretroviral effects in infected target cells. Selectively targets single-stranded DNA and does not deaminate double-stranded DNA or single- or double-stranded RNA. Exhibits antiviral activity against simian immunodeficiency virus (SIV), hepatitis B virus (HBV), herpes simplex virus 1 (HHV-1) and Epstein-Barr virus (EBV) and may inhibit the mobility of LTR and non-LTR retrotransposons. May also play a role in the epigenetic regulation of gene expression through the process of active DNA demethylation. This Homo sapiens (Human) protein is DNA dC-&gt;dU-editing enzyme APOBEC-3C (APOBEC3C).